A 944-amino-acid chain; its full sequence is LPS-assembly protein LptD (944 aa).

Residues 1–33 (MALKSPAFRRKFPLLVTGGLLALQPLATSFVVA) form the signal peptide. The interval 52–102 (KATGNLPPRPVHPGAAAASSGAEAPGEVGEAQAEKPMLVTESKGRGLKSRS) is disordered. The segment covering 64 to 82 (PGAAAASSGAEAPGEVGEA) has biased composition (low complexity).

This sequence belongs to the LptD family. Component of the lipopolysaccharide transport and assembly complex. Interacts with LptE and LptA.

It is found in the cell outer membrane. Its function is as follows. Together with LptE, is involved in the assembly of lipopolysaccharide (LPS) at the surface of the outer membrane. The protein is LPS-assembly protein LptD of Pseudomonas entomophila (strain L48).